Here is a 658-residue protein sequence, read N- to C-terminus: ATP-dependent RNA helicase DDX3Y (658 aa).

Positions 1–10 (MSHVVVKNDP) are enriched in basic and acidic residues. The interval 1-141 (MSHVVVKNDP…DDWSKPLPPS (141 aa)) is disordered. The residue at position 2 (serine 2) is an N-acetylserine. Positions 15-34 (QLANLDLNSEKQSGGASTAS) are enriched in polar residues. Residues 44–68 (RNREASKGFHDKDSSGWSCSKDKDA) are compositionally biased toward basic and acidic residues. N6-acetyllysine is present on lysine 55. A phosphoserine mark is found at serine 81, serine 85, and serine 89. Residues 93–128 (GRFDDRGRSDYDGIGNRDRPGFGRFERSGHSRWCDK) are compositionally biased toward basic and acidic residues. Arginine 100 is modified (omega-N-methylarginine). Serine 101 is subject to Phosphoserine. Tyrosine 103 is modified (phosphotyrosine). The residue at position 109 (arginine 109) is an Omega-N-methylarginine. Phosphoserine is present on residues serine 129 and serine 181. The Q motif motif lies at 178–206 (ENFSDIDMGEIIMGNIELTRYTRPTPVQK). 198–205 (YTRPTPVQ) provides a ligand contact to ATP. Residues 209–401 (IPIIKGKRDL…RDFLDEYIFL (193 aa)) form the Helicase ATP-binding domain. Lysine 213 participates in a covalent cross-link: Glycyl lysine isopeptide (Lys-Gly) (interchain with G-Cter in SUMO2). ATP is bound at residue 222 to 229 (AQTGSGKT). Residues 345–348 (DEAD) carry the DEAD box motif. In terms of domain architecture, Helicase C-terminal spans 412 to 573 (NITQKVVWVE…EVPSWLENMA (162 aa)). Serine 454 is modified (phosphoserine). An Omega-N-methylarginine modification is found at arginine 588. 2 positions are modified to phosphoserine: serine 590 and serine 601. Positions 597–625 (DYRQSSGSSSSGFGASRGSSSRSGGSGYG) are disordered. Residues 601–619 (SSGSSSSGFGASRGSSSRS) are compositionally biased toward low complexity. Residues arginine 613 and arginine 628 each carry the omega-N-methylarginine modification.

Belongs to the DEAD box helicase family. DDX3/DED1 subfamily. May interact with TDRD3.

It localises to the cytoplasm. The protein localises to the nucleus. The enzyme catalyses ATP + H2O = ADP + phosphate + H(+). Functionally, probable ATP-dependent RNA helicase. May play a role in spermatogenesis. The sequence is that of ATP-dependent RNA helicase DDX3Y (DDX3Y) from Pongo abelii (Sumatran orangutan).